A 513-amino-acid polypeptide reads, in one-letter code: Xyloglucan 6-xylosyltransferase 4 (513 aa).

Over 1–39 the chain is Cytoplasmic; it reads MFQDGSRSSGSGRGLSTTAVSNGGWRTRGFLRGWQIQNT. A helical; Signal-anchor for type II membrane protein membrane pass occupies residues 40–60; that stretch reads LFNNIKFMILCCFVTILILLG. At 61 to 513 the chain is on the lumenal side; sequence TIRVGNLGSS…IRRMHMETKP (453 aa). 5 N-linked (GlcNAc...) asparagine glycosylation sites follow: Asn-76, Asn-110, Asn-142, Asn-174, and Asn-490.

Belongs to the glycosyltransferase 34 family.

The protein resides in the golgi apparatus membrane. It carries out the reaction Transfers an alpha-D-xylosyl residue from UDP-D-xylose to a glucose residue in xyloglucan, forming an alpha-(1-&gt;6)-D-xylosyl-D-glucose linkage.. In terms of biological role, xylosyltransferase specific to UDP-D-xylose that accepts cellohexaose as substrate to produce xyloglucan. This chain is Xyloglucan 6-xylosyltransferase 4, found in Arabidopsis thaliana (Mouse-ear cress).